A 286-amino-acid chain; its full sequence is Forkhead box protein E3 (286 aa).

Residues 1 to 62 (MDAHVAFSGF…GRRRRRPLQR (62 aa)) are disordered. A DNA-binding region (fork-head) is located at residues 64–158 (KPPYSYIALI…DNGSFLRRRK (95 aa)).

It is found in the nucleus. Transcription factor that controls lens epithelial cell growth through regulation of proliferation, apoptosis and cell cycle. During lens development, controls the ratio of the lens fiber cells to the cells of the anterior lens epithelium by regulating the rate of proliferation and differentiation. Controls lens vesicle closure and subsequent separation of the lens vesicle from ectoderm. Controls the expression of DNAJB1 in a pathway that is crucial for the development of the anterior segment of the eye. The chain is Forkhead box protein E3 (Foxe3) from Rattus norvegicus (Rat).